The chain runs to 92 residues: Alpha-defensin 25 (92 aa).

A signal peptide spans 1-19; sequence MKTLVLLSALALLAFQVQA. A propeptide spanning residues 20–57 is cleaved from the precursor; it reads DPIQNRDEESKIDEQPGKEDQAVSVSFGDPEGSSLQEE. The span at 24 to 40 shows a compositional bias: basic and acidic residues; that stretch reads NRDEESKIDEQPGKEDQ. The interval 24–53 is disordered; that stretch reads NRDEESKIDEQPGKEDQAVSVSFGDPEGSS. Cystine bridges form between Cys-63–Cys-92, Cys-65–Cys-80, and Cys-70–Cys-91.

This sequence belongs to the alpha-defensin family.

It localises to the secreted. In terms of biological role, may have microbicidal activities. In Mus musculus (Mouse), this protein is Alpha-defensin 25 (Defa25).